The following is a 136-amino-acid chain: Large ribosomal subunit protein uL16 (136 aa).

The protein belongs to the universal ribosomal protein uL16 family. In terms of assembly, part of the 50S ribosomal subunit.

In terms of biological role, binds 23S rRNA and is also seen to make contacts with the A and possibly P site tRNAs. This chain is Large ribosomal subunit protein uL16, found in Glaesserella parasuis serovar 5 (strain SH0165) (Haemophilus parasuis).